We begin with the raw amino-acid sequence, 281 residues long: Merozoite surface protein 2 (281 aa).

Positions 1–20 are cleaved as a signal peptide; the sequence is MKVIKTLSIINFFIFVTFNI. Residues N22 and N36 are each glycosylated (N-linked (GlcNAc...) asparagine). A disordered region spans residues 42–242; that stretch reads SMEESNPPTG…DSQKECTDGN (201 aa). The polymorphic region stretch occupies residues 44 to 207; that stretch reads EESNPPTGAS…EQTESPELQS (164 aa). 3 tandem repeats follow at residues 51–58, 59–66, and 67–74. Residues 51-74 are 3 X 8 AA tandem repeats of G-A-S-G-R-A-G-A; that stretch reads GASGRAGAGASGRAGAGASGRAGA. Positions 54 to 76 are enriched in gly residues; sequence GRAGAGASGRAGAGASGRAGAGA. A compositionally biased stretch (low complexity) spans 77–133; the sequence is GAVASAGSGDGAVASAGNGANPGADAKRSTSTPATTTTTTTTNDAEASTSTSSENPN. 2 stretches are compositionally biased toward polar residues: residues 150-174 and 181-209; these read NKAN…NVPP and KSPT…QSAP. N158 carries N-linked (GlcNAc...) asparagine glycosylation. N-linked (GlcNAc...) asparagine glycosylation occurs at N230. C238 and C246 are joined by a disulfide. N-linked (GlcNAc...) asparagine glycans are attached at residues N254 and N255. N255 carries GPI-anchor amidated asparagine lipidation. Positions 256 to 281 are cleaved as a propeptide — removed in mature form; sequence SSNIASINKFVVLISATLVLSFAIFI.

Its subcellular location is the cell membrane. Its function is as follows. May play a role in the merozoite attachment to the erythrocyte. This Plasmodium falciparum (isolate thtn / Thailand) protein is Merozoite surface protein 2.